The chain runs to 165 residues: Lipoprotein signal peptidase (165 aa).

The next 3 helical transmembrane spans lie at 9 to 29, 69 to 89, and 98 to 118; these read FLAI…VLLY, KYFL…FLFL, and IRFS…DIVF. Catalysis depends on residues Asp124 and Asp142. Residues 133 to 153 form a helical membrane-spanning segment; it reads WFFPTFNFADIFISLGTLIFI.

This sequence belongs to the peptidase A8 family.

The protein resides in the cell inner membrane. It carries out the reaction Release of signal peptides from bacterial membrane prolipoproteins. Hydrolyzes -Xaa-Yaa-Zaa-|-(S,diacylglyceryl)Cys-, in which Xaa is hydrophobic (preferably Leu), and Yaa (Ala or Ser) and Zaa (Gly or Ala) have small, neutral side chains.. It participates in protein modification; lipoprotein biosynthesis (signal peptide cleavage). This protein specifically catalyzes the removal of signal peptides from prolipoproteins. The protein is Lipoprotein signal peptidase of Chlamydia abortus (strain DSM 27085 / S26/3) (Chlamydophila abortus).